Reading from the N-terminus, the 1238-residue chain is uncharacterized protein (1238 aa).

Disordered stretches follow at residues methionine 1 to serine 38, serine 122 to phenylalanine 156, proline 229 to glutamate 439, lysine 660 to alanine 1016, glutamate 1051 to serine 1083, and lysine 1098 to arginine 1191. Low complexity-rich tracts occupy residues asparagine 10–asparagine 26, leucine 129–leucine 149, and glutamine 234–glutamine 276. The segment covering glutamate 317–serine 343 has biased composition (polar residues). The segment covering glutamine 344–glycine 361 has biased composition (basic and acidic residues). The span at aspartate 362–asparagine 372 shows a compositional bias: acidic residues. The span at threonine 383–lysine 394 shows a compositional bias: basic residues. A compositionally biased stretch (basic and acidic residues) spans glycine 395–alanine 416. Composition is skewed to low complexity over residues threonine 417–asparagine 435, glutamine 678–glutamate 691, and glutamine 712–glutamine 792. Residues glutamine 793–glutamine 805 show a composition bias toward basic and acidic residues. 2 stretches are compositionally biased toward low complexity: residues serine 806 to lysine 859 and serine 882 to arginine 906. Residues glutamate 916–valine 927 show a composition bias toward acidic residues. Polar residues predominate over residues methionine 929–glutamine 944. The segment covering glutamate 966 to alanine 975 has biased composition (basic and acidic residues). Acidic residues predominate over residues glycine 976–glutamine 990. 2 stretches are compositionally biased toward low complexity: residues glutamine 1062 to serine 1083 and serine 1108 to asparagine 1121. The span at proline 1123–arginine 1133 shows a compositional bias: polar residues. A compositionally biased stretch (low complexity) spans serine 1142–glutamate 1181. Over residues asparagine 1182–arginine 1191 the composition is skewed to polar residues.

This is an uncharacterized protein from Dictyostelium discoideum (Social amoeba).